A 158-amino-acid chain; its full sequence is Cyclic pyranopterin monophosphate synthase (158 aa).

Substrate is bound by residues 75 to 77 and 113 to 114; these read LCH and ME. Residue D128 is part of the active site.

It belongs to the MoaC family. Homohexamer; trimer of dimers.

It carries out the reaction (8S)-3',8-cyclo-7,8-dihydroguanosine 5'-triphosphate = cyclic pyranopterin phosphate + diphosphate. The protein operates within cofactor biosynthesis; molybdopterin biosynthesis. Its function is as follows. Catalyzes the conversion of (8S)-3',8-cyclo-7,8-dihydroguanosine 5'-triphosphate to cyclic pyranopterin monophosphate (cPMP). This Mannheimia succiniciproducens (strain KCTC 0769BP / MBEL55E) protein is Cyclic pyranopterin monophosphate synthase.